The chain runs to 295 residues: Pyridoxal 5'-phosphate synthase subunit PdxS (295 aa).

Residue Asp25 participates in D-ribose 5-phosphate binding. The active-site Schiff-base intermediate with D-ribose 5-phosphate is Lys82. Residue Gly154 coordinates D-ribose 5-phosphate. Position 166 (Arg166) interacts with D-glyceraldehyde 3-phosphate. D-ribose 5-phosphate is bound by residues Gly215 and 236-237 (GS).

The protein belongs to the PdxS/SNZ family. In terms of assembly, in the presence of PdxT, forms a dodecamer of heterodimers.

The catalysed reaction is aldehydo-D-ribose 5-phosphate + D-glyceraldehyde 3-phosphate + L-glutamine = pyridoxal 5'-phosphate + L-glutamate + phosphate + 3 H2O + H(+). It functions in the pathway cofactor biosynthesis; pyridoxal 5'-phosphate biosynthesis. Functionally, catalyzes the formation of pyridoxal 5'-phosphate from ribose 5-phosphate (RBP), glyceraldehyde 3-phosphate (G3P) and ammonia. The ammonia is provided by the PdxT subunit. Can also use ribulose 5-phosphate and dihydroxyacetone phosphate as substrates, resulting from enzyme-catalyzed isomerization of RBP and G3P, respectively. The sequence is that of Pyridoxal 5'-phosphate synthase subunit PdxS from Oceanobacillus iheyensis (strain DSM 14371 / CIP 107618 / JCM 11309 / KCTC 3954 / HTE831).